We begin with the raw amino-acid sequence, 933 residues long: Bifunctional uridylyltransferase/uridylyl-removing enzyme (933 aa).

A uridylyltransferase region spans residues Met-1 to Asp-390. The segment at Val-391–Thr-745 is uridylyl-removing. The 123-residue stretch at Val-506–Leu-628 folds into the HD domain. ACT domains are found at residues Glu-746–Lys-829 and Val-859–Ala-933.

Belongs to the GlnD family. Mg(2+) is required as a cofactor.

It carries out the reaction [protein-PII]-L-tyrosine + UTP = [protein-PII]-uridylyl-L-tyrosine + diphosphate. The enzyme catalyses [protein-PII]-uridylyl-L-tyrosine + H2O = [protein-PII]-L-tyrosine + UMP + H(+). Uridylyltransferase (UTase) activity is inhibited by glutamine, while glutamine activates uridylyl-removing (UR) activity. Uridylylation process is dependent on ATP and 2-oxoglutarate, which are effector molecules that likely bind to PII proteins and control their activity. Modifies, by uridylylation and deuridylylation, the PII regulatory proteins GlnB and GlnZ, in response to the nitrogen status of the cell that GlnD senses through the glutamine level. Under low glutamine levels, catalyzes the conversion of the PII proteins and UTP to PII-UMP and PPi, while under higher glutamine levels, GlnD hydrolyzes PII-UMP to PII and UMP (deuridylylation). Thus, controls uridylylation state and activity of the PII proteins, and plays an important role in the regulation of nitrogen fixation and metabolism. The protein is Bifunctional uridylyltransferase/uridylyl-removing enzyme of Azospirillum brasilense.